The following is a 491-amino-acid chain: MAFYSYNSVLAIARTRFPSHFVHPTCSSYSPSCAFLHLPDSHLNKTCMKNYESKKYSDPSQPGNTVLHPGTRLIQKLHTSTCWLQEVPGKPQLEQATKHPQVTSPQATKETGMEIKEGKQSYRQKIMDELKYYYNGFYLLWIDAKVAARMVWRLLHGQVLTRRERRRLLRTCVDFFRLVPFMVFLIVPFMEFLLPVFLKLFPEMLPSTFESESKKEEKQKKKMAVKLELAKFLQETMTEMARRNRAKMGDASTQLSSYVKQVQTGHKPSTKEIVRFSKLFEDQLALEHLDRPQLVALCKLLELQTFGTNNLLRFQLLMKLKSIKADDEIIAKEGVTALSVSELQAACRARGMRSLGLTEEQLRQQLTEWQDLHLKENVPPSLLLLSRTFYLIDVKPKPIEIPLSGEAPKTDILVELPTFTESKENMVDLAPQLKGTKDEDFIQPPPVTSSPITPSTPISLPKGPITSSEEPTLQAKSQMTAQNSKASSKGA.

The transit peptide at 1–25 (MAFYSYNSVLAIARTRFPSHFVHPT) directs the protein to the mitochondrion. Over 26 to 177 (CSSYSPSCAF…LLRTCVDFFR (152 aa)) the chain is Mitochondrial intermembrane. The span at 94–109 (EQATKHPQVTSPQATK) shows a compositional bias: polar residues. Residues 94 to 115 (EQATKHPQVTSPQATKETGMEI) are disordered. The chain crosses the membrane as a helical span at residues 178–198 (LVPFMVFLIVPFMEFLLPVFL). The Mitochondrial matrix portion of the chain corresponds to 199 to 491 (KLFPEMLPST…QNSKASSKGA (293 aa)). Residues 208–235 (TFESESKKEEKQKKKMAVKLELAKFLQE) adopt a coiled-coil conformation. The region spanning 221–438 (KKMAVKLELA…LAPQLKGTKD (218 aa)) is the Letm1 RBD domain. The interval 435–491 (GTKDEDFIQPPPVTSSPITPSTPISLPKGPITSSEEPTLQAKSQMTAQNSKASSKGA) is disordered. Low complexity predominate over residues 449-461 (SSPITPSTPISLP). Over residues 465–491 (ITSSEEPTLQAKSQMTAQNSKASSKGA) the composition is skewed to polar residues.

It is found in the mitochondrion inner membrane. The protein is LETM1 domain-containing protein LETM2, mitochondrial (LETM2) of Homo sapiens (Human).